A 238-amino-acid polypeptide reads, in one-letter code: Ubiquinone biosynthesis O-methyltransferase (238 aa).

4 residues coordinate S-adenosyl-L-methionine: Arg40, Gly59, Asp81, and Met126.

Belongs to the methyltransferase superfamily. UbiG/COQ3 family.

It catalyses the reaction a 3-demethylubiquinol + S-adenosyl-L-methionine = a ubiquinol + S-adenosyl-L-homocysteine + H(+). The enzyme catalyses a 3-(all-trans-polyprenyl)benzene-1,2-diol + S-adenosyl-L-methionine = a 2-methoxy-6-(all-trans-polyprenyl)phenol + S-adenosyl-L-homocysteine + H(+). It functions in the pathway cofactor biosynthesis; ubiquinone biosynthesis. O-methyltransferase that catalyzes the 2 O-methylation steps in the ubiquinone biosynthetic pathway. In Neisseria meningitidis serogroup A / serotype 4A (strain DSM 15465 / Z2491), this protein is Ubiquinone biosynthesis O-methyltransferase.